The chain runs to 142 residues: Large ribosomal subunit protein uL13 (142 aa).

It belongs to the universal ribosomal protein uL13 family. In terms of assembly, part of the 50S ribosomal subunit.

This protein is one of the early assembly proteins of the 50S ribosomal subunit, although it is not seen to bind rRNA by itself. It is important during the early stages of 50S assembly. This Dechloromonas aromatica (strain RCB) protein is Large ribosomal subunit protein uL13.